The chain runs to 220 residues: Dual specificity protein phosphatase 19 (220 aa).

At M1 the chain carries N-acetylmethionine. Residues 64-205 enclose the Tyrosine-protein phosphatase domain; sequence QVGVIKPWLL…LRTYQVGKES (142 aa). Residue C149 is the Phosphocysteine intermediate of the active site.

The protein belongs to the protein-tyrosine phosphatase family. Non-receptor class dual specificity subfamily.

It carries out the reaction O-phospho-L-tyrosyl-[protein] + H2O = L-tyrosyl-[protein] + phosphate. It catalyses the reaction O-phospho-L-seryl-[protein] + H2O = L-seryl-[protein] + phosphate. The enzyme catalyses O-phospho-L-threonyl-[protein] + H2O = L-threonyl-[protein] + phosphate. Its activity is regulated as follows. Phosphatase activity is enhanced by Ca(2+) and Mn(2+). In terms of biological role, has a dual specificity toward Ser/Thr and Tyr-containing proteins. This chain is Dual specificity protein phosphatase 19, found in Mus musculus (Mouse).